The primary structure comprises 232 residues: 6-phosphogluconolactonase (232 aa).

It belongs to the glucosamine/galactosamine-6-phosphate isomerase family. 6-phosphogluconolactonase subfamily.

The catalysed reaction is 6-phospho-D-glucono-1,5-lactone + H2O = 6-phospho-D-gluconate + H(+). It participates in carbohydrate degradation; pentose phosphate pathway; D-ribulose 5-phosphate from D-glucose 6-phosphate (oxidative stage): step 2/3. Hydrolysis of 6-phosphogluconolactone to 6-phosphogluconate. The chain is 6-phosphogluconolactonase (pgl) from Caulobacter vibrioides (strain ATCC 19089 / CIP 103742 / CB 15) (Caulobacter crescentus).